Here is a 1012-residue protein sequence, read N- to C-terminus: Roundabout homolog 4 (1012 aa).

The signal sequence occupies residues 1-27; that stretch reads MGSGGTGLLGTEWPLPLLLLFIMGGEA. Ig-like C2-type domains are found at residues 32–132 and 138–225; these read PQIL…ARLS and EDFQ…ARVS. Intrachain disulfides connect Cys53–Cys115 and Cys159–Cys208. N-linked (GlcNAc...) asparagine glycans are attached at residues Asn201 and Asn247. Fibronectin type-III domains lie at 249 to 346 and 348 to 443; these read TLLN…LPEQ and PSAP…LEQA. N-linked (GlcNAc...) asparagine glycans are attached at residues Asn361, Asn390, and Asn397. Disordered stretches follow at residues 533–553 and 586–616; these read TSGS…GLDP and LIAE…AGTS. The span at 534–550 shows a compositional bias: low complexity; the sequence is SGSRDLSSSSSLSSRLG. Over residues 592–601 the composition is skewed to pro residues; that stretch reads SSPPVRPSPK. N-linked (GlcNAc...) asparagine glycans are attached at residues Asn681 and Asn713. A disordered region spans residues 711–801; that stretch reads HRNSSELASR…LEEEEDQDSV (91 aa). Positions 745–759 are enriched in low complexity; that stretch reads LQAPSSDPLPAAPLS. Residues 760–771 show a composition bias toward polar residues; that stretch reads VLNSSRPSSPQA. N-linked (GlcNAc...) asparagine glycans are attached at residues Asn762 and Asn783. The segment covering 772-791 has biased composition (low complexity); that stretch reads SFLSCPSPSSSNLSSSSLSS. A phosphoserine mark is found at Ser814 and Ser947. The segment at 980–1012 is disordered; the sequence is RLGRGLPPWPPDSRASSQRSWLTGAVPKAGDSS.

This sequence belongs to the immunoglobulin superfamily. ROBO family. As to quaternary structure, interacts with SLIT2 and ENAH. As to expression, expressed specifically in embryo and adult vascular endothelium.

In terms of biological role, receptor for Slit proteins, at least for SLIT2, and seems to be involved in angiogenesis and vascular patterning. May mediate the inhibition of primary endothelial cell migration by Slit proteins. Involved in the maintenance of endothelial barrier organization and function. This Mus musculus (Mouse) protein is Roundabout homolog 4 (Robo4).